Consider the following 218-residue polypeptide: MNKAQLVEAIADKLGGRQQAADAVDAVLDALVRAVVAGDRVSVTGFGSFEKVDRPARYARNPQTGERVRVKKTSVPRFRAGQGFKDLVSGSKKLPKNDIAVKKAPKGSLSGPPPTISKAAGKKAAAKKATGAAKKTTGAAKKTSAAAKKTTAKKTTGAAKTTAKKTTAKKSAAKTTTAAAKKTAAKKAPAKKATAKKAPAKKSTARKTTAKKATARKK.

The bacterial histone-like domain stretch occupies residues 1 to 91 (MNKAQLVEAI…QGFKDLVSGS (91 aa)). The disordered stretch occupies residues 101 to 218 (VKKAPKGSLS…TAKKATARKK (118 aa)). Positions 118–218 (KAAGKKAAAK…TAKKATARKK (101 aa)) are degenerate repeats region. Over residues 127–161 (KKATGAAKKTTGAAKKTSAAAKKTTAKKTTGAAKT) the composition is skewed to low complexity. The span at 162-172 (TAKKTTAKKSA) shows a compositional bias: basic residues. Over residues 173 to 182 (AKTTTAAAKK) the composition is skewed to low complexity. The segment covering 183 to 218 (TAAKKAPAKKATAKKAPAKKSTARKTTAKKATARKK) has biased composition (basic residues).

It belongs to the bacterial histone-like protein family. Long actinobacterial subfamily. As to quaternary structure, homodimer.

Its subcellular location is the cytoplasm. The protein localises to the nucleoid. Functionally, histone-like DNA-binding protein which is capable of wrapping DNA to stabilize it, and thus to prevent its denaturation under extreme environmental conditions. This is DNA-binding protein HU 2 (hup2) from Streptomyces coelicolor (strain ATCC BAA-471 / A3(2) / M145).